Consider the following 100-residue polypeptide: UPF0125 protein CV_3462 (100 aa).

Belongs to the UPF0125 (RnfH) family.

This is UPF0125 protein CV_3462 from Chromobacterium violaceum (strain ATCC 12472 / DSM 30191 / JCM 1249 / CCUG 213 / NBRC 12614 / NCIMB 9131 / NCTC 9757 / MK).